The sequence spans 142 residues: uncharacterized protein (142 aa).

The tract at residues 1–22 is disordered; that stretch reads MSGSVNQNTDQHSQDSSSTPNN. The next 2 membrane-spanning stretches (helical) occupy residues 63–83 and 109–129; these read LFVMYMIVQVSYYIVPFVLLV and IIDGIIGVLQFIFWFWIFVDL.

The protein localises to the membrane. This is an uncharacterized protein from Acanthamoeba polyphaga mimivirus (APMV).